Here is a 218-residue protein sequence, read N- to C-terminus: Small ribosomal subunit protein uS3 (218 aa).

The 69-residue stretch at 38 to 106 (IRDYVAKRLS…RVHINIVEIK (69 aa)) folds into the KH type-2 domain.

This sequence belongs to the universal ribosomal protein uS3 family. Part of the 30S ribosomal subunit. Forms a tight complex with proteins S10 and S14.

Its function is as follows. Binds the lower part of the 30S subunit head. Binds mRNA in the 70S ribosome, positioning it for translation. The polypeptide is Small ribosomal subunit protein uS3 (Listeria monocytogenes serotype 4b (strain F2365)).